A 294-amino-acid chain; its full sequence is Cytosolic Fe-S cluster assembly factor CFD1 (294 aa).

25–32 (GKGGVGKS) is an ATP binding site. C214 and C217 together coordinate [4Fe-4S] cluster.

The protein belongs to the Mrp/NBP35 ATP-binding proteins family. NUBP2/CFD1 subfamily. In terms of assembly, heterotetramer of 2 NBP35 and 2 CFD1 chains. [4Fe-4S] cluster is required as a cofactor.

The protein resides in the cytoplasm. Functionally, component of the cytosolic iron-sulfur (Fe/S) protein assembly (CIA) machinery. Required for maturation of extramitochondrial Fe-S proteins. The NBP35-CFD1 heterotetramer forms a Fe-S scaffold complex, mediating the de novo assembly of an Fe-S cluster and its transfer to target apoproteins. Required for biogenesis and export of both ribosomal subunits, which may reflect a role in assembly of the Fe/S clusters in RLI1, a protein which performs rRNA processing and ribosome export. This Candida albicans (strain SC5314 / ATCC MYA-2876) (Yeast) protein is Cytosolic Fe-S cluster assembly factor CFD1.